A 492-amino-acid chain; its full sequence is Cysteine--tRNA ligase (492 aa).

Position 29 (Cys-29) interacts with Zn(2+). Positions 31 to 41 match the 'HIGH' region motif; that stretch reads LTTSDPPHLGH. Zn(2+)-binding residues include Cys-229, His-254, and Glu-258. The 'KMSKS' region motif lies at 286 to 290; sequence KMSSS.

This sequence belongs to the class-I aminoacyl-tRNA synthetase family. It depends on Zn(2+) as a cofactor.

It localises to the cytoplasm. The enzyme catalyses tRNA(Cys) + L-cysteine + ATP = L-cysteinyl-tRNA(Cys) + AMP + diphosphate. This is Cysteine--tRNA ligase from Haloarcula marismortui (strain ATCC 43049 / DSM 3752 / JCM 8966 / VKM B-1809) (Halobacterium marismortui).